Consider the following 123-residue polypeptide: DIDTLVDMVQQRLANHQPQPSLLHGDLWSGNCALGPDGPYIFDPACYWGDRECDLAMLPMHPEQPPQIYDGYQSVSPLPSGFLDRQPIYQLYTLLNRAILFGGQHLVTAAQQALDDVLMEKMR.

Asp-26 (proton acceptor) is an active-site residue.

This sequence belongs to the fructosamine kinase family.

Functionally, ketoamine kinase that phosphorylates ketoamines on the third carbon of the sugar moiety to generate ketoamine 3-phosphate. In Klebsiella pneumoniae, this protein is Probable ketoamine kinase in tonB 3'region.